The primary structure comprises 581 residues: MNIENYLSETLAKVFQKLGYAESFAKVVTSTREDVGHFQCNGAMPLAKFAKKPPLAIAEEIVEHIDAEDIFAKLEVAKPGFINITLAPKFLADTTNRFLNSNKFGVQNNLPNRKVVLDFGGPNVAKPMHVGHIRSALLGDALQRIHRFCGDTVISDVHLGDWGTQMGMLIEEIKLQSPQLVYFDENYTGEYPTESPITVQELAEIYPRASKRCKSDINEMEKARLATFELQQGRRGYVALWQHFVRISIDAVKKDFDSLDVHFDLWLGESDANKFIDEMISYFQANNFIYEDEGAWVIDTNKDGVPPLIVIKKDGGVMYGTTDLATLWQRSKDLDPDEIIYVVDKRQSLHFKQVFSVAERTKVVSEKCKLKHVAFGTVNGKDGRPFKTREGGVMHLADLISQAKEYAKNRMPDENDDSIIDQIAMATIKFGDLINNYANDYFFDLEKFAQHEGKTGPYLLYTVVRAKSILRKIFGDNYDIKSLAKDYKVVNAHNEYEEKLQLQLIQFPIAVQRAYENSQPHHICEYAYSLANSFNKFYVNCPINNLDDESLKKARIALCMATVKAMTIASDLIGISIPERM.

Positions 122–132 (PNVAKPMHVGH) match the 'HIGH' region motif.

This sequence belongs to the class-I aminoacyl-tRNA synthetase family. In terms of assembly, monomer.

Its subcellular location is the cytoplasm. It carries out the reaction tRNA(Arg) + L-arginine + ATP = L-arginyl-tRNA(Arg) + AMP + diphosphate. The chain is Arginine--tRNA ligase from Francisella tularensis subsp. holarctica (strain FTNF002-00 / FTA).